A 419-amino-acid chain; its full sequence is CCA-adding enzyme (419 aa).

ATP is bound by residues Ser-54 and Arg-57. Positions 54 and 57 each coordinate CTP. Positions 66, 68, and 118 each coordinate Mg(2+). Residues His-141, Lys-161, and Tyr-170 each contribute to the ATP site. Residues His-141, Lys-161, and Tyr-170 each coordinate CTP.

The protein belongs to the tRNA nucleotidyltransferase/poly(A) polymerase family. Archaeal CCA-adding enzyme subfamily. In terms of assembly, homodimer. Mg(2+) serves as cofactor.

It carries out the reaction a tRNA precursor + 2 CTP + ATP = a tRNA with a 3' CCA end + 3 diphosphate. The catalysed reaction is a tRNA with a 3' CCA end + 2 CTP + ATP = a tRNA with a 3' CCACCA end + 3 diphosphate. Its function is as follows. Catalyzes the addition and repair of the essential 3'-terminal CCA sequence in tRNAs without using a nucleic acid template. Adds these three nucleotides in the order of C, C, and A to the tRNA nucleotide-73, using CTP and ATP as substrates and producing inorganic pyrophosphate. tRNA 3'-terminal CCA addition is required both for tRNA processing and repair. Also involved in tRNA surveillance by mediating tandem CCA addition to generate a CCACCA at the 3' terminus of unstable tRNAs. While stable tRNAs receive only 3'-terminal CCA, unstable tRNAs are marked with CCACCA and rapidly degraded. The polypeptide is CCA-adding enzyme (Pyrobaculum aerophilum (strain ATCC 51768 / DSM 7523 / JCM 9630 / CIP 104966 / NBRC 100827 / IM2)).